We begin with the raw amino-acid sequence, 191 residues long: MQLNELNCVILCGGKSSRMGQDKSKLILKNQNLTQFQVEKFSKIFKNVYVSAKEDKFENHFSLIKDSLEFEVYSPMLALYSILSNFKNEFVFVLSVDSPKVGENELLKMLPFLEQNYKIIIAKTPLHKHPLCGFYHSSLAQTCKNFLEKNEQKIGLLFSEIKTKFVEFEDEDAFLNLNFYEEYEKFKSELR.

Residues 11–13 (LCG), K23, D66, and D97 each bind GTP. Residue D97 participates in Mg(2+) binding.

It belongs to the MobA family. Monomer. The cofactor is Mg(2+).

The protein localises to the cytoplasm. It carries out the reaction Mo-molybdopterin + GTP + H(+) = Mo-molybdopterin guanine dinucleotide + diphosphate. Its function is as follows. Transfers a GMP moiety from GTP to Mo-molybdopterin (Mo-MPT) cofactor (Moco or molybdenum cofactor) to form Mo-molybdopterin guanine dinucleotide (Mo-MGD) cofactor. The polypeptide is Molybdenum cofactor guanylyltransferase (Campylobacter jejuni subsp. jejuni serotype O:6 (strain 81116 / NCTC 11828)).